The following is a 518-amino-acid chain: Glutamate--cysteine ligase (518 aa).

It belongs to the glutamate--cysteine ligase type 1 family. Type 1 subfamily.

It catalyses the reaction L-cysteine + L-glutamate + ATP = gamma-L-glutamyl-L-cysteine + ADP + phosphate + H(+). The protein operates within sulfur metabolism; glutathione biosynthesis; glutathione from L-cysteine and L-glutamate: step 1/2. In Shigella boydii serotype 18 (strain CDC 3083-94 / BS512), this protein is Glutamate--cysteine ligase.